Here is a 209-residue protein sequence, read N- to C-terminus: Orotate phosphoribosyltransferase (209 aa).

5-phospho-alpha-D-ribose 1-diphosphate-binding positions include R96, K100, H102, and 122–130; that span reads EDLISTGGS. An orotate-binding site is contributed by S126.

Belongs to the purine/pyrimidine phosphoribosyltransferase family. PyrE subfamily. Homodimer. The cofactor is Mg(2+).

The catalysed reaction is orotidine 5'-phosphate + diphosphate = orotate + 5-phospho-alpha-D-ribose 1-diphosphate. Its pathway is pyrimidine metabolism; UMP biosynthesis via de novo pathway; UMP from orotate: step 1/2. Functionally, catalyzes the transfer of a ribosyl phosphate group from 5-phosphoribose 1-diphosphate to orotate, leading to the formation of orotidine monophosphate (OMP). This chain is Orotate phosphoribosyltransferase, found in Streptococcus thermophilus (strain ATCC BAA-491 / LMD-9).